Consider the following 472-residue polypeptide: Phosphoglucosamine mutase (472 aa).

Serine 123 (phosphoserine intermediate) is an active-site residue. 4 residues coordinate Mg(2+): serine 123, aspartate 262, aspartate 264, and aspartate 266. Position 123 is a phosphoserine (serine 123).

Belongs to the phosphohexose mutase family. Mg(2+) serves as cofactor. Post-translationally, activated by phosphorylation.

The catalysed reaction is alpha-D-glucosamine 1-phosphate = D-glucosamine 6-phosphate. Catalyzes the conversion of glucosamine-6-phosphate to glucosamine-1-phosphate. This is Phosphoglucosamine mutase from Synechococcus elongatus (strain ATCC 33912 / PCC 7942 / FACHB-805) (Anacystis nidulans R2).